The sequence spans 213 residues: Protein Flattop (213 aa).

Positions 127–213 are disordered; the sequence is VDQPAEQSKI…HNSRPASQEK (87 aa). Residues 151–213 are compositionally biased toward polar residues; the sequence is QHIQDQSRPA…HNSRPASQEK (63 aa).

Belongs to the Flattop family.

The protein localises to the cytoplasm. It localises to the cytoskeleton. Its subcellular location is the cilium basal body. It is found in the cell projection. The protein resides in the cilium. The protein localises to the apical cell membrane. It localises to the cilium axoneme. Microtubule inner protein (MIP) part of the dynein-decorated doublet microtubules (DMTs) in cilia axoneme. Acts as a regulator of cilium basal body docking and positioning in mono- and multiciliated cells. Regulates basal body docking and cilia formation in multiciliated lung cells. Regulates kinocilium positioning and stereocilia bundle morphogenesis in the inner ear. The chain is Protein Flattop from Danio rerio (Zebrafish).